Here is a 349-residue protein sequence, read N- to C-terminus: tRNA N6-adenosine threonylcarbamoyltransferase (349 aa).

Residues histidine 111 and histidine 115 each contribute to the Fe cation site. Substrate-binding positions include 134–138 (LVSGG), aspartate 167, glycine 180, aspartate 184, and asparagine 279. Aspartate 307 provides a ligand contact to Fe cation.

Belongs to the KAE1 / TsaD family. It depends on Fe(2+) as a cofactor.

The protein resides in the cytoplasm. The catalysed reaction is L-threonylcarbamoyladenylate + adenosine(37) in tRNA = N(6)-L-threonylcarbamoyladenosine(37) in tRNA + AMP + H(+). Required for the formation of a threonylcarbamoyl group on adenosine at position 37 (t(6)A37) in tRNAs that read codons beginning with adenine. Is involved in the transfer of the threonylcarbamoyl moiety of threonylcarbamoyl-AMP (TC-AMP) to the N6 group of A37, together with TsaE and TsaB. TsaD likely plays a direct catalytic role in this reaction. The polypeptide is tRNA N6-adenosine threonylcarbamoyltransferase (Nostoc punctiforme (strain ATCC 29133 / PCC 73102)).